Reading from the N-terminus, the 233-residue chain is Phosphoribosylformylglycinamidine synthase subunit PurQ (233 aa).

The region spanning 3–233 (SAVLVFPGIN…GLVAHLERAA (231 aa)) is the Glutamine amidotransferase type-1 domain. Residue Cys87 is the Nucleophile of the active site. Active-site residues include His204 and Glu206.

Part of the FGAM synthase complex composed of 1 PurL, 1 PurQ and 2 PurS subunits.

It is found in the cytoplasm. It catalyses the reaction N(2)-formyl-N(1)-(5-phospho-beta-D-ribosyl)glycinamide + L-glutamine + ATP + H2O = 2-formamido-N(1)-(5-O-phospho-beta-D-ribosyl)acetamidine + L-glutamate + ADP + phosphate + H(+). It carries out the reaction L-glutamine + H2O = L-glutamate + NH4(+). Its pathway is purine metabolism; IMP biosynthesis via de novo pathway; 5-amino-1-(5-phospho-D-ribosyl)imidazole from N(2)-formyl-N(1)-(5-phospho-D-ribosyl)glycinamide: step 1/2. Part of the phosphoribosylformylglycinamidine synthase complex involved in the purines biosynthetic pathway. Catalyzes the ATP-dependent conversion of formylglycinamide ribonucleotide (FGAR) and glutamine to yield formylglycinamidine ribonucleotide (FGAM) and glutamate. The FGAM synthase complex is composed of three subunits. PurQ produces an ammonia molecule by converting glutamine to glutamate. PurL transfers the ammonia molecule to FGAR to form FGAM in an ATP-dependent manner. PurS interacts with PurQ and PurL and is thought to assist in the transfer of the ammonia molecule from PurQ to PurL. The chain is Phosphoribosylformylglycinamidine synthase subunit PurQ from Nitrobacter winogradskyi (strain ATCC 25391 / DSM 10237 / CIP 104748 / NCIMB 11846 / Nb-255).